A 445-amino-acid polypeptide reads, in one-letter code: Signal recognition particle 54 kDa protein (445 aa).

Residues 102-109, 184-188, and 244-247 contribute to the GTP site; these read GVQGSGKT, DTAGR, and TKMD.

This sequence belongs to the GTP-binding SRP family. SRP54 subfamily. In terms of assembly, part of the signal recognition particle protein translocation system, which is composed of SRP and FtsY. Archaeal SRP consists of a 7S RNA molecule of 300 nucleotides and two protein subunits: SRP54 and SRP19.

It is found in the cytoplasm. It carries out the reaction GTP + H2O = GDP + phosphate + H(+). Involved in targeting and insertion of nascent membrane proteins into the cytoplasmic membrane. Binds to the hydrophobic signal sequence of the ribosome-nascent chain (RNC) as it emerges from the ribosomes. The SRP-RNC complex is then targeted to the cytoplasmic membrane where it interacts with the SRP receptor FtsY. This Sulfurisphaera tokodaii (strain DSM 16993 / JCM 10545 / NBRC 100140 / 7) (Sulfolobus tokodaii) protein is Signal recognition particle 54 kDa protein.